The sequence spans 290 residues: Sodium/potassium-transporting ATPase subunit beta-2 (290 aa).

Residues 1-39 are Cytoplasmic-facing; the sequence is MVIQKEKKSCGQVVEEWKEFVWNPRTHQFMGRTGTSWAF. A helical; Signal-anchor for type II membrane protein transmembrane segment spans residues 40–67; it reads ILLFYLVFYGFLTAMFTLTMWVMLQTVS. At 68-290 the chain is on the extracellular side; sequence EHTPKYQDRL…VAFKLRINKT (223 aa). Residues Asn96 and Asn118 are each glycosylated (N-linked (GlcNAc...) asparagine). An intrachain disulfide couples Cys129 to Cys150. N-linked (GlcNAc...) asparagine glycans are attached at residues Asn153 and Asn159. Residues Cys160 and Cys177 are joined by a disulfide bond. Asn193, Asn197, and Asn238 each carry an N-linked (GlcNAc...) asparagine glycan. The interval 193–290 is immunoglobulin-like; the sequence is NQSMNVTCAG…VAFKLRINKT (98 aa). Cys200 and Cys261 are oxidised to a cystine.

The protein belongs to the X(+)/potassium ATPases subunit beta family. The sodium/potassium-transporting ATPase is composed of a catalytic alpha subunit, an auxiliary non-catalytic beta subunit and an additional regulatory subunit. Interacts with BSG.

It localises to the cell membrane. Functionally, this is the non-catalytic component of the active enzyme, which catalyzes the hydrolysis of ATP coupled with the exchange of Na(+) and K(+) ions across the plasma membrane. The exact function of the beta-2 subunit is not known. Its function is as follows. Mediates cell adhesion of neurons and astrocytes, and promotes neurite outgrowth. This chain is Sodium/potassium-transporting ATPase subunit beta-2 (ATP1B2), found in Oryctolagus cuniculus (Rabbit).